We begin with the raw amino-acid sequence, 234 residues long: Eukaryotic translation initiation factor 3 subunit K (234 aa).

Residues 46–219 (SDIEANLALL…EAKPATTTES (174 aa)) enclose the PCI domain.

This sequence belongs to the eIF-3 subunit K family. As to quaternary structure, component of the eukaryotic translation initiation factor 3 (eIF-3) complex.

It is found in the cytoplasm. Its function is as follows. Component of the eukaryotic translation initiation factor 3 (eIF-3) complex, which is involved in protein synthesis of a specialized repertoire of mRNAs and, together with other initiation factors, stimulates binding of mRNA and methionyl-tRNAi to the 40S ribosome. The eIF-3 complex specifically targets and initiates translation of a subset of mRNAs involved in cell proliferation. The polypeptide is Eukaryotic translation initiation factor 3 subunit K (Yarrowia lipolytica (strain CLIB 122 / E 150) (Yeast)).